Consider the following 229-residue polypeptide: Cytidylate kinase (229 aa).

Position 10–18 (10–18 (GHSSSGKST)) interacts with ATP.

Belongs to the cytidylate kinase family. Type 1 subfamily.

It localises to the cytoplasm. The enzyme catalyses CMP + ATP = CDP + ADP. It catalyses the reaction dCMP + ATP = dCDP + ADP. This is Cytidylate kinase from Parabacteroides distasonis (strain ATCC 8503 / DSM 20701 / CIP 104284 / JCM 5825 / NCTC 11152).